The primary structure comprises 607 residues: Arginine--tRNA ligase (607 aa).

A 'HIGH' region motif is present at residues 147-157 (PNIAKEMHVGH).

Belongs to the class-I aminoacyl-tRNA synthetase family. Monomer.

It is found in the cytoplasm. The catalysed reaction is tRNA(Arg) + L-arginine + ATP = L-arginyl-tRNA(Arg) + AMP + diphosphate. This Prochlorococcus marinus (strain NATL2A) protein is Arginine--tRNA ligase.